Consider the following 196-residue polypeptide: uncharacterized protein (196 aa).

It belongs to the CDP-alcohol phosphatidyltransferase class-I family.

This is an uncharacterized protein from Aquifex aeolicus (strain VF5).